The chain runs to 320 residues: Annexin A5 (320 aa).

Position 2 is an N-acetylalanine (Ala-2). Annexin repeat units follow at residues 15 to 86, 87 to 158, 170 to 242, and 246 to 317; these read FDER…ALMK, PSRL…VLLQ, AQVE…AVVK, and SIPA…LLCG. Lys-29 is covalently cross-linked (Glycyl lysine isopeptide (Lys-Gly) (interchain with G-Cter in SUMO1); alternate). A Glycyl lysine isopeptide (Lys-Gly) (interchain with G-Cter in SUMO2); alternate cross-link involves residue Lys-29. Ser-37 is subject to Phosphoserine. Lys-70, Lys-76, Lys-79, Lys-97, and Lys-101 each carry N6-acetyllysine. N6-succinyllysine is present on Lys-290. A [IL]-x-C-x-x-[DE] motif motif is present at residues 314–320; it reads LLCGGED.

The protein belongs to the annexin family. In terms of assembly, monomer. Binds ATRX and EIF5B. S-nitrosylation is induced by interferon-gamma and oxidatively-modified low-densitity lipoprotein (LDL(ox)) possibly implicating the iNOS-S100A8/9 transnitrosylase complex.

In terms of biological role, this protein is an anticoagulant protein that acts as an indirect inhibitor of the thromboplastin-specific complex, which is involved in the blood coagulation cascade. The protein is Annexin A5 (ANXA5) of Macaca fascicularis (Crab-eating macaque).